Consider the following 880-residue polypeptide: Calcium-transporting ATPase lmo0841 (880 aa).

The next 4 membrane-spanning stretches (helical) occupy residues 47–67 (LWKL…VIAA), 68–88 (LVQL…VLIV), 243–263 (LGLG…GRVL), and 271–291 (MATA…AAIP). Ca(2+) is bound by residues Val-287, Ala-288, Ile-290, and Glu-292. The active-site 4-aspartylphosphate intermediate is the Asp-334. Helical transmembrane passes span 681–701 (IAYL…ALVL), 707–727 (FTAL…AIAL), 756–776 (AVIS…YIGM), 819–839 (YVIG…LPGA), and 854–874 (WSIA…IKVV). Ca(2+) is bound by residues Asn-716 and Asp-720.

Belongs to the cation transport ATPase (P-type) (TC 3.A.3) family. Type IIA subfamily.

It is found in the cell membrane. The enzyme catalyses Ca(2+)(in) + ATP + H2O = Ca(2+)(out) + ADP + phosphate + H(+). Its activity is regulated as follows. Phosphorylation is inhibited by EGTA and vanadate. ATPase activity is stimulated by Sr(2+). Inhibited by very high concentrations of cyclopiazonic acid (CPA). In terms of biological role, catalyzes the hydrolysis of ATP coupled with the transport of calcium. The transport is electrogenic with a probable ATP:Ca(2+):H(+) stoichiometry of 1:1:1. May have an important role in survival of the bacterium when stressed by a combination of a high calcium concentration and alkaline pH. The chain is Calcium-transporting ATPase lmo0841 from Listeria monocytogenes serovar 1/2a (strain ATCC BAA-679 / EGD-e).